The chain runs to 32 residues: Ovostatin (32 aa).

Positions 27–30 (CGEQ) form a cross-link, isoglutamyl cysteine thioester (Cys-Gln).

Belongs to the protease inhibitor I39 (alpha-2-macroglobulin) family. Homotetramer, which consists of two pairs of disulfide-linked chains.

It localises to the secreted. In terms of biological role, is able to inhibit all four classes of proteinases by a unique 'trapping' mechanism. This protein has a peptide stretch, called the 'bait region' which contains specific cleavage sites for different proteinases. When a proteinase cleaves the bait region, a conformational change is induced in the protein which traps the proteinase. The entrapped enzyme remains active against low molecular weight substrates (activity against high molecular weight substrates is greatly reduced). Following cleavage in the bait region a thioester bond is hydrolyzed and mediates the covalent binding of the protein to the proteinase. This Anas platyrhynchos (Mallard) protein is Ovostatin.